Here is a 1693-residue protein sequence, read N- to C-terminus: Non-structural polyprotein pORF1 (1693 aa).

The 185-residue stretch at 56–240 folds into the Alphavirus-like MT domain; it reads VFRPEVFWNH…HDVSNLRSWI (185 aa). The methyltransferase stretch occupies residues 60 to 240; the sequence is EVFWNHPIQR…HDVSNLRSWI (181 aa). A Y-domain region spans residues 241 to 439; sequence RTTKVTGDHP…FYAQCRRWLS (199 aa). Cys-434 and Cys-481 form a disulfide bridge. Residues 442-509 are protease; sequence FHLDPRVLVF…EAYEGSDVDP (68 aa). A zinc-binding region spans residues 510-691; the sequence is AESAISDISG…FSPGHVWESA (182 aa). Positions 671, 673, and 686 each coordinate Zn(2+). Residues 712-771 are disordered; it reads PSPAQPDLGFTSEPSIPSRAATPTPAAPLPPPAPDPSPTLSAPARGEPAPGATARAPAIT. The interval 712 to 778 is hinge; sequence PSPAQPDLGF…AITHQTARHR (67 aa). Residues 725–735 are compositionally biased toward low complexity; sequence PSIPSRAATPT. Residues 736–748 show a composition bias toward pro residues; sequence PAAPLPPPAPDPS. The 147-residue stretch at 775-921 folds into the Macro domain; it reads ARHRRLLFTY…LYLPELAARW (147 aa). An X-domain region spans residues 785 to 942; that stretch reads PDGSKVFAGS…TITEDVARTA (158 aa). The region spanning 934–1082 is the (+)RNA virus helicase ATP-binding domain; sequence ITEDVARTAN…RPDLAPTSWW (149 aa). The tract at residues 960–1204 is NTPase/helicase; sequence GCRVTPGVVQ…ISDAIVNNFF (245 aa). 975-982 serves as a coordination point for ATP; it reads GVPGSGKS. In terms of domain architecture, (+)RNA virus helicase C-terminal spans 1083-1216; it reads HVTHRCPADV…GGEIGHQRPS (134 aa). The RNA-directed RNA polymerase stretch occupies residues 1207-1693; the sequence is GGEIGHQRPS…LTNSILCRVE (487 aa). A RdRp catalytic domain is found at 1454–1565; it reads SMVFENDFSE…LCSEYRQSPG (112 aa).

It belongs to the hepevirus non-structural polyprotein family. As to quaternary structure, the protease domain interacts with host EIF2AK4 (via C-terminus); this interaction inhibits dimerization of EIF2AK4 and prevents EIF2AK4-mediated phosphorylation of host EIF2A. It depends on Mg(2+) as a cofactor. ORF1 polyprotein does not seem to be processed into distinct enzymatic domains by a viral protease belonging to ORF1, but could be processed by a host serine protease like thrombin.

It is found in the host cytoplasm. The protein localises to the host perinuclear region. The enzyme catalyses RNA(n) + a ribonucleoside 5'-triphosphate = RNA(n+1) + diphosphate. It catalyses the reaction GTP + S-adenosyl-L-methionine = N(7)-methyl-GTP + S-adenosyl-L-homocysteine. Putative protease: Inhibited by chymostatin. Functionally, methyltransferase: Displays a capping enzyme activity. This function is necessary since all viral RNAs are synthesized in the cytoplasm, and host capping enzymes are restricted to the nucleus. The enzymatic reaction involves a covalent link between 7-methyl-GMP and the methyltransferase, whereas eukaryotic capping enzymes form a covalent complex only with GMP. Methyltransferase catalyzes transfer of a methyl group from S-adenosylmethionine to GTP and GDP to yield m(7)GTP or m(7)GDP. GDP is a better substrate than GTP. This enzyme also displays guanylyltransferase activity to form a covalent complex, methyltransferase-m(7)GMP, from which 7-methyl-GMP is transferred to the mRNA to create the cap structure. Its function is as follows. Y-domain: Indispensable for virus replication. In terms of biological role, putative protease: The putative protease domain although necessary for replication of the virus may not be a protease but rather a structural Zn(2+)-binding domain. Inhibits induction of IFN-beta by MDA5 and RIG-I pathways and down-regulates the expression of MDA5. NTPase/helicase: Multi-functional protein that exhibits NTPase and RNA unwinding activities. Hydrolyzes all NTPs efficiently and unwinds RNA duplexes containing 5' overhangs. Possesses a sequence independent RNA-5'-triphosphatase (RTPase) activity suggestive of its role in forming viral cap structure. Also participates in viral genome replication, RNA translocation and genome packaging/unpackaging. Functionally, RNA-directed RNA polymerase: Plays an essential role in the virus replication. Binds to the 3'-end of the genomic RNA to initiate viral replication. The protein is Non-structural polyprotein pORF1 of Hepatitis E virus genotype 1 (isolate Human/Pakistan/Sar-55) (HEV-1).